The following is a 207-amino-acid chain: Ribosomal RNA large subunit methyltransferase E (207 aa).

Residues G60, W62, D80, D96, and D121 each contribute to the S-adenosyl-L-methionine site. The Proton acceptor role is filled by K161.

It belongs to the class I-like SAM-binding methyltransferase superfamily. RNA methyltransferase RlmE family.

The protein localises to the cytoplasm. It carries out the reaction uridine(2552) in 23S rRNA + S-adenosyl-L-methionine = 2'-O-methyluridine(2552) in 23S rRNA + S-adenosyl-L-homocysteine + H(+). Functionally, specifically methylates the uridine in position 2552 of 23S rRNA at the 2'-O position of the ribose in the fully assembled 50S ribosomal subunit. The sequence is that of Ribosomal RNA large subunit methyltransferase E from Ectopseudomonas mendocina (strain ymp) (Pseudomonas mendocina).